The primary structure comprises 185 residues: Ribosome-recycling factor (185 aa).

The protein belongs to the RRF family.

The protein localises to the cytoplasm. Its function is as follows. Responsible for the release of ribosomes from messenger RNA at the termination of protein biosynthesis. May increase the efficiency of translation by recycling ribosomes from one round of translation to another. The sequence is that of Ribosome-recycling factor from Kocuria rhizophila (strain ATCC 9341 / DSM 348 / NBRC 103217 / DC2201).